The chain runs to 1207 residues: DNA-directed RNA polymerase, mitochondrial (1207 aa).

The N-terminal 41 residues, 1–41 (MSALRWTRSAAGLGRVLRSPGPHRPPSEEGTFGGFCSSRRS), are a transit peptide targeting the mitochondrion. 2 disordered regions span residues 1–48 (MSAL…SPRE) and 82–103 (KKVQ…KLEA). PPR repeat units lie at residues 232–266 (TLHM…GLSP) and 267–302 (DLCS…GFQP). A disordered region spans residues 702–724 (VPPPRSEAPRPARYQLPPGSTPV). Positions 773 to 1207 (FRGRTYPCPP…QVIRSTYFFS (435 aa)) are mediates interaction with TEFM. Residues Asp893, Lys962, and Asp1121 contribute to the active site.

This sequence belongs to the phage and mitochondrial RNA polymerase family. Homodimer. Component of the mitochondrial transcription initiation complex, composed at least of TFB2M, TFAM and POLRMT. In this complex TFAM recruits POLRMT to the promoter whereas TFB2M induces structural changes in POLRMT to enable promoter opening and trapping of the DNA non-template strand. Upon metabolic stress, forms a complex composed of FOXO3, SIRT3 and mitochondrial RNA polymerase POLRMT; the complex is recruited to mtDNA in a SIRT3-dependent manner. Also forms a complex composed of FOXO3, SIRT3, TFAM and POLRMT. Interacts with TFB1M and TFB2M, leading to the stimulation of transcription. Interacts with TEFM. Interacts with MTRES1.

The protein resides in the mitochondrion. It carries out the reaction RNA(n) + a ribonucleoside 5'-triphosphate = RNA(n+1) + diphosphate. Functionally, DNA-dependent RNA polymerase catalyzes the transcription of mitochondrial DNA into RNA using the four ribonucleoside triphosphates as substrates. Component of the mitochondrial transcription initiation complex, composed at least of TFB2M, TFAM and POLRMT that is required for basal transcription of mitochondrial DNA. In this complex, TFAM recruits POLRMT to a specific promoter whereas TFB2M induces structural changes in POLRMT to enable promoter opening and trapping of the DNA non-template strand. Has DNA primase activity. Catalyzes the synthesis of short RNA primers that are necessary for the initiation of lagging-strand DNA synthesis from the origin of light-strand DNA replication (OriL). This is DNA-directed RNA polymerase, mitochondrial from Mus musculus (Mouse).